We begin with the raw amino-acid sequence, 613 residues long: Dihydroxy-acid dehydratase (613 aa).

Residue aspartate 81 participates in Mg(2+) binding. Cysteine 122 contacts [2Fe-2S] cluster. Residues aspartate 123 and lysine 124 each coordinate Mg(2+). Lysine 124 is subject to N6-carboxylysine. Cysteine 195 contacts [2Fe-2S] cluster. Residue glutamate 491 participates in Mg(2+) binding. Serine 517 functions as the Proton acceptor in the catalytic mechanism.

This sequence belongs to the IlvD/Edd family. As to quaternary structure, homodimer. It depends on [2Fe-2S] cluster as a cofactor. Requires Mg(2+) as cofactor.

It catalyses the reaction (2R)-2,3-dihydroxy-3-methylbutanoate = 3-methyl-2-oxobutanoate + H2O. The catalysed reaction is (2R,3R)-2,3-dihydroxy-3-methylpentanoate = (S)-3-methyl-2-oxopentanoate + H2O. The protein operates within amino-acid biosynthesis; L-isoleucine biosynthesis; L-isoleucine from 2-oxobutanoate: step 3/4. It functions in the pathway amino-acid biosynthesis; L-valine biosynthesis; L-valine from pyruvate: step 3/4. Functionally, functions in the biosynthesis of branched-chain amino acids. Catalyzes the dehydration of (2R,3R)-2,3-dihydroxy-3-methylpentanoate (2,3-dihydroxy-3-methylvalerate) into 2-oxo-3-methylpentanoate (2-oxo-3-methylvalerate) and of (2R)-2,3-dihydroxy-3-methylbutanoate (2,3-dihydroxyisovalerate) into 2-oxo-3-methylbutanoate (2-oxoisovalerate), the penultimate precursor to L-isoleucine and L-valine, respectively. The protein is Dihydroxy-acid dehydratase of Photobacterium profundum (strain SS9).